A 114-amino-acid polypeptide reads, in one-letter code: UPF0342 protein LCABL_19440 (114 aa).

The protein belongs to the UPF0342 family.

The chain is UPF0342 protein LCABL_19440 from Lacticaseibacillus casei (strain BL23) (Lactobacillus casei).